A 420-amino-acid polypeptide reads, in one-letter code: Torsin-4A (420 aa).

Residues 130–150 (CLLLFIAIVCFQIFNAIENLD) form a helical membrane-spanning segment. 202–209 (GPSGVGKS) provides a ligand contact to ATP.

The protein belongs to the ClpA/ClpB family. Torsin subfamily.

Its subcellular location is the membrane. The polypeptide is Torsin-4A (tor4a) (Xenopus tropicalis (Western clawed frog)).